The sequence spans 56 residues: Ovomucoid (56 aa).

One can recognise a Kazal-like domain in the interval 6–56 (VDCSEYPKPACTLEYRPLCGSDNKTYGNKCNFCNAVVESNGTLTLSHFGKC). 3 disulfide bridges follow: C8-C38, C16-C35, and C24-C56. N45 carries an N-linked (GlcNAc...) asparagine glycan.

Its subcellular location is the secreted. The chain is Ovomucoid from Meleagris ocellata (Ocellated turkey).